A 264-amino-acid chain; its full sequence is Transmembrane protein 270 (264 aa).

Transmembrane regions (helical) follow at residues 31–51, 74–94, and 133–153; these read HLYR…LGLA, LSLA…LLLW, and LFLS…LLTW. The segment covering 227–236 has biased composition (polar residues); the sequence is AQEVKSQETS. A disordered region spans residues 227 to 264; sequence AQEVKSQETSGPPPQFLIPESSTTESGPLPPQPETPGE. A compositionally biased stretch (pro residues) spans 254-264; the sequence is PLPPQPETPGE.

In terms of tissue distribution, testis.

It is found in the membrane. This chain is Transmembrane protein 270, found in Mus musculus (Mouse).